A 37-amino-acid polypeptide reads, in one-letter code: Large ribosomal subunit protein bL36 (37 aa).

The protein belongs to the bacterial ribosomal protein bL36 family.

This is Large ribosomal subunit protein bL36 from Persephonella marina (strain DSM 14350 / EX-H1).